A 61-amino-acid chain; its full sequence is Protein translocase subunit SecE (61 aa).

A helical membrane pass occupies residues 39–59 (LGILVIGLVGMLIRIIGILML).

The protein belongs to the SecE/SEC61-gamma family. As to quaternary structure, component of the Sec protein translocase complex. Heterotrimer consisting of SecY (alpha), SecG (beta) and SecE (gamma) subunits. The heterotrimers can form oligomers, although 1 heterotrimer is thought to be able to translocate proteins. Interacts with the ribosome. May interact with SecDF, and other proteins may be involved.

It localises to the cell membrane. Essential subunit of the Sec protein translocation channel SecYEG. Clamps together the 2 halves of SecY. May contact the channel plug during translocation. The sequence is that of Protein translocase subunit SecE from Pyrococcus horikoshii (strain ATCC 700860 / DSM 12428 / JCM 9974 / NBRC 100139 / OT-3).